Reading from the N-terminus, the 488-residue chain is Capsid protein (488 aa).

Residues 80–93 (ISEDESDSGEEPEF) are compositionally biased toward acidic residues. The interval 80-143 (ISEDESDSGE…QPKTIPGQKQ (64 aa)) is disordered. A compositionally biased stretch (basic and acidic residues) spans 94–109 (EQVRMDRTGGTEIPKE). Positions 121–124 (RKRK) match the Nuclear localization signal motif. Over residues 134–143 (QPKTIPGQKQ) the composition is skewed to polar residues. A CCHC-type zinc finger spans residues 410–427 (CRCWICNIEGHYANECPN). Positions 463–488 (YKEEEEETSTEESDDESSTSEDSDSD) are disordered. Over residues 464–488 (KEEEEETSTEESDDESSTSEDSDSD) the composition is skewed to acidic residues.

Belongs to the caulimoviridae capsid protein family. As to quaternary structure, interacts (via nuclear localization signal) with host importin alpha.

It localises to the virion. The protein resides in the host nucleus. Functionally, self assembles to form an icosahedral capsid, about 50 nm in diameter, nm, composed of 420 subunits of the viral capsid protein. The capsid encapsulates the genomic dsDNA. Following virus entry into host cell, provides nuclear import of the viral genome. Virus particles do not enter the nucleus, but dock at the nuclear membrane through the interaction with host importins. The protein is Capsid protein of Arabidopsis thaliana (Mouse-ear cress).